A 1993-amino-acid polypeptide reads, in one-letter code: Otoferlin (1993 aa).

A C2 1 domain is found at 1 to 98; that stretch reads MALIVHLKTV…VEENRVEVSD (98 aa). The Cytoplasmic segment spans residues 1-1959; it reads MALIVHLKTV…IKYLICTRYK (1959 aa). The interval 127–212 is disordered; sequence PWDDGDFLGD…KEEPQRQDEP (86 aa). Residues 129 to 145 show a composition bias toward acidic residues; sequence DDGDFLGDESLQEEEKD. Basic and acidic residues-rich tracts occupy residues 163 to 186 and 202 to 211; these read PGEK…EHKA and HKEEPQRQDE. C2 domains are found at residues 251-372 and 415-546; these read KRSK…HKWA and IEGN…FLPT. The disordered stretch occupies residues 654 to 708; it reads NYGNEVDGTSRPQRPRPRKEPGDEEEVDLIQNSSDDEGDEAGDLASVSSTPPMRP. Residues 675 to 695 are compositionally biased toward acidic residues; the sequence is GDEEEVDLIQNSSDDEGDEAG. Residues 807 to 836 are a coiled coil; the sequence is RERLKSCMRELESMGQQAKSLRAQVKRHTV. 2 consecutive C2 domains span residues 959–1084 and 1131–1257; these read LHSF…PPRF and RGPI…ANWN. Ca(2+) is bound by residues D991, D997, D1053, D1055, and D1061. 2 disordered regions span residues 1294 to 1318 and 1339 to 1398; these read AEDE…EEPD and LRQH…EKKK. Residues 1348–1357 are compositionally biased toward acidic residues; it reads DLEEKEEMDS. Positions 1366-1379 are enriched in basic and acidic residues; it reads KNKEKSRAAKEEKK. C2 domains lie at 1460 to 1589 and 1710 to 1861; these read LPED…ATCG and DMPA…KQCT. 8 residues coordinate Ca(2+): D1504, D1510, D1559, D1561, D1567, D1832, S1835, and D1838. A helical membrane pass occupies residues 1960–1980; that stretch reads WLIIKIVLALLGLLMLALFLY. Over 1981-1993 the chain is Extracellular; that stretch reads SLPGYMVKKLLGA.

This sequence belongs to the ferlin family. In terms of assembly, interacts with SNAP25; the interaction is direct. Interacts with STX1; the interaction is direct. Interacts with RAB8B. Requires Ca(2+) as cofactor. As to expression, isoform 1 is expressed in the cochlea and brain. Expressed in cerebellum (Purkinje cells), hippocampus (granule cells of the dentate gyrus and in pyramidal cells of the CA1-CA3 region) and cortex (stellate and pyramidal cells). Expressed in hair cells of vestibular organs such as the saccule, utricle and crista ampullari. Expressed in the cochlear inner and outer cells (IHCs and OHCs) (at protein level). Expressed in brain: brainstem, cerebellum (granules cells and Purkinje cell layer), cortex (layers IV and V), inferior colliculus, superior colliculus and hippocampus (granule cells of the dentate gyrus and in pyramidal cells of the CA1-CA3 region).

The protein resides in the cytoplasmic vesicle. The protein localises to the secretory vesicle. Its subcellular location is the synaptic vesicle membrane. It localises to the basolateral cell membrane. It is found in the endoplasmic reticulum membrane. The protein resides in the golgi apparatus membrane. The protein localises to the presynaptic cell membrane. Its subcellular location is the cell membrane. In terms of biological role, key calcium ion sensor involved in the Ca(2+)-triggered synaptic vesicle-plasma membrane fusion and in the control of neurotransmitter release at these output synapses. Interacts in a calcium-dependent manner to the presynaptic SNARE proteins at ribbon synapses of cochlear inner hair cells (IHCs) to trigger exocytosis of neurotransmitter. Also essential to synaptic exocytosis in immature outer hair cells (OHCs). May also play a role within the recycling of endosomes. The sequence is that of Otoferlin (Otof) from Rattus norvegicus (Rat).